We begin with the raw amino-acid sequence, 318 residues long: Biotin synthase (318 aa).

The 227-residue stretch at aspartate 46–arginine 272 folds into the Radical SAM core domain. The [4Fe-4S] cluster site is built by cysteine 61, cysteine 65, and cysteine 68. Cysteine 105, cysteine 138, cysteine 197, and lysine 267 together coordinate [2Fe-2S] cluster.

It belongs to the radical SAM superfamily. Biotin synthase family. As to quaternary structure, homodimer. Requires [4Fe-4S] cluster as cofactor. [2Fe-2S] cluster serves as cofactor.

The enzyme catalyses (4R,5S)-dethiobiotin + (sulfur carrier)-SH + 2 reduced [2Fe-2S]-[ferredoxin] + 2 S-adenosyl-L-methionine = (sulfur carrier)-H + biotin + 2 5'-deoxyadenosine + 2 L-methionine + 2 oxidized [2Fe-2S]-[ferredoxin]. It participates in cofactor biosynthesis; biotin biosynthesis; biotin from 7,8-diaminononanoate: step 2/2. Its function is as follows. Catalyzes the conversion of dethiobiotin (DTB) to biotin by the insertion of a sulfur atom into dethiobiotin via a radical-based mechanism. The chain is Biotin synthase from Cenarchaeum symbiosum (strain A).